Here is a 967-residue protein sequence, read N- to C-terminus: MAELNFKAIEEKWQKRWMEARVFEPDRKAKPKEKKFYITVAFPYLSGHLHVGHARTYTIPDVIARFKRMQGYNVLFPMGWHITGAPIVGIAERIKNRDPKTIHIYRDVYKVPEEILWKFEDPKEIVKYFMKAAKETFIRAGFSVDWTREFHTTSLFPPFSKFIEWQFWTLKDMGLVVKGAHRVRWDPVVGTPLGDHDIMEGEDVQILEYVIIKFILEENGETIYLPAATLRPETVYGVTNMWLNPEATYVKAKVRKGDREELWIVSKEAAYKLSFQDREIEVIEEFKGEKLIGKYVKNPVTGDEVIILPAEFVDPDNATGVVMSVPAHAPFDHIALEDLKKETEILLKYDIDPRVVEEISYISLISLEGYGEFPAVEEAERLGVKSQKDKEKLEQATKNIYKAEYHKGIFKIEPYAGKPVQEVKELVAKEMMEKGIAEIMYEFADKPVISRFGNQAVIKIIHDQWFIDYGNPEWKAKAREALANMTIYPESRRAQFEAVIDWLDKKACARKVGLGTPLPWDPDWVIESLSDSTIYMAYYTISRHINQLRKEGKLDAEKLDREFFDYIFREPFSEEKERKLSEKTGIPAETIHEMKEEFEYWYPLDWRCSAKDLIPNHLTFFIFNHVAIFDKKHWPKGIAVNGFGTLEGQKMSKSKGNVLNFIDAIEENGADVVRLYIMGLAEHDSDFDWRRKEVGKLRKQVERFYELVSEFATYEAKEGVELKDIDRWMLHRLNKAIEGATKALEEFRTRTAVQWAFYTVLNDLRWYLRRTEGRDDDAKRYVLRTLADVWVRLMAPFTPHISEELWEKLGGEGFVSLAPWPEPVPEWWNETVEAEEDFVKSLIEDIKEIITVAKIENPKRAYIYTAPEWKWRVVEVVAEKRDFKAAMAELMKDPEMRKHGKEVSKLIQRLIKERAFEVKRIDEEKALREAKDFIEKELGIEIIINPEEDRGGKKKQAMPLKPAVFVE.

The short motif at 43–53 (PYLSGHLHVGH) is the 'HIGH' region element. A 'KMSKS' region motif is present at residues 650-654 (KMSKS). K653 contributes to the ATP binding site.

This sequence belongs to the class-I aminoacyl-tRNA synthetase family.

It is found in the cytoplasm. It carries out the reaction tRNA(Leu) + L-leucine + ATP = L-leucyl-tRNA(Leu) + AMP + diphosphate. The polypeptide is Leucine--tRNA ligase (Thermococcus kodakarensis (strain ATCC BAA-918 / JCM 12380 / KOD1) (Pyrococcus kodakaraensis (strain KOD1))).